We begin with the raw amino-acid sequence, 611 residues long: UvrABC system protein C (611 aa).

In terms of domain architecture, GIY-YIG spans 6-84; it reads NNPGVYRMFN…IKRLRPRFNV (79 aa). Positions 194 to 229 constitute a UVR domain; that stretch reads QSVKDHLAAAMQAASADLDFEHAAVYRDRLAALSHV.

This sequence belongs to the UvrC family. As to quaternary structure, interacts with UvrB in an incision complex.

The protein resides in the cytoplasm. In terms of biological role, the UvrABC repair system catalyzes the recognition and processing of DNA lesions. UvrC both incises the 5' and 3' sides of the lesion. The N-terminal half is responsible for the 3' incision and the C-terminal half is responsible for the 5' incision. In Brucella abortus (strain 2308), this protein is UvrABC system protein C.